Consider the following 233-residue polypeptide: Small ribosomal subunit protein uS5 (233 aa).

2 stretches are compositionally biased toward basic and acidic residues: residues Met-1 to Asn-12 and Arg-39 to Glu-54. The segment at Met-1–Glu-54 is disordered. One can recognise an S5 DRBM domain in the interval Leu-59–Val-122.

The protein belongs to the universal ribosomal protein uS5 family. Part of the 30S ribosomal subunit. Contacts proteins S4 and S8.

With S4 and S12 plays an important role in translational accuracy. Its function is as follows. Located at the back of the 30S subunit body where it stabilizes the conformation of the head with respect to the body. The protein is Small ribosomal subunit protein uS5 of Zymomonas mobilis subsp. mobilis (strain ATCC 31821 / ZM4 / CP4).